We begin with the raw amino-acid sequence, 370 residues long: Leucine-rich repeat-containing protein 19 (370 aa).

A signal peptide spans 1 to 24; that stretch reads MKVTGITILFWPLSMILLSDKIQS. Residues 25–270 lie on the Extracellular side of the membrane; that stretch reads SKREVQCNFT…SEHEPLGKSW (246 aa). N-linked (GlcNAc...) asparagine glycans are attached at residues N32, N37, N62, and N95. LRR repeat units lie at residues 46-71, 72-95, 96-119, 120-143, and 145-168; these read KKDV…VLQT, YFLL…GFGN, LSSL…AFLG, LNKL…VFVP, and RSLK…LFHL. The LRRCT domain occupies 176–227; that stretch reads NLWNCSCSLFNLQNWLNTSNVTLENENITMCSYPNSLQSYNIKTVPHKAECH. 6 N-linked (GlcNAc...) asparagine glycosylation sites follow: N179, N192, N195, N202, N251, and N256. The helical transmembrane segment at 271–291 threads the bilayer; that stretch reads AFLVGVVVTVLTTSLLIFIAI. Topologically, residues 292-370 are cytoplasmic; it reads KCPIWYNILL…IDIHELCEEN (79 aa).

In terms of assembly, interacts with TRAF2 and TRAF6. Expressed in renal collecting duct epithelial cells.

It localises to the membrane. With respect to regulation, activated by TLR ligands such as LPS, bacterial DNA and peptidoglycan. Pathogen-recognition receptor which mediates the activation of TRAF2- and TRAF6 NF-kappa-B signaling pathways and induces the expression of pro-inflammatory cytokines. In kidney, prevents infection by uropathogenic bacteria by inducing the production of cytokines, chemokines and antimicrobial substances. In gut, involved in host-microbiota interactions, plays a critical role in promoting the recruitment of immune cells and intestinal inflammation. The protein is Leucine-rich repeat-containing protein 19 of Homo sapiens (Human).